Consider the following 471-residue polypeptide: Variant surface glycoprotein WRATAT A (471 aa).

The first 18 residues, 1–18 (MSVLFLLLAITRTASVKA), serve as a signal peptide directing secretion. 2 N-linked (GlcNAc...) asparagine glycosylation sites follow: asparagine 61 and asparagine 133. The tract at residues 373 to 457 (QEQTLATTGT…ANTTGSSNSF (85 aa)) is disordered. Low complexity predominate over residues 379-392 (TTGTKSSSPQSTQQ). Intrachain disulfides connect cysteine 401/cysteine 414 and cysteine 410/cysteine 427. Residues 401–447 (CNDKAKETECNSPCKWDKEEKDEKKRCKLSEEGKQAEKENQEGKDGK) are compositionally biased toward basic and acidic residues. The span at 448–457 (ANTTGSSNSF) shows a compositional bias: polar residues. N-linked (GlcNAc...) asparagine glycosylation is present at asparagine 449. Serine 454 is lipidated: GPI-anchor amidated serine. Positions 455-471 (NSFVIKTSPLLLAVLLL) are cleaved as a propeptide — removed in mature form.

The protein localises to the cell membrane. Functionally, VSG forms a coat on the surface of the parasite. The trypanosome evades the immune response of the host by expressing a series of antigenically distinct VSGs from an estimated 1000 VSG genes. The protein is Variant surface glycoprotein WRATAT A of Trypanosoma brucei rhodesiense.